The chain runs to 161 residues: UPF0225 protein NTHI0386 (161 aa).

This sequence belongs to the UPF0225 family.

This is UPF0225 protein NTHI0386 from Haemophilus influenzae (strain 86-028NP).